The primary structure comprises 1007 residues: Lysosomal alpha-mannosidase (1007 aa).

Residues 1-47 (MGASVLPLGLGAGDCQSSSGRRMSACLPRTALSFLLSLLLATPGARA) form the signal peptide. 2 cysteine pairs are disulfide-bonded: Cys53-Cys356 and Cys266-Cys271. Positions 70 and 72 each coordinate Zn(2+). N-linked (GlcNAc...) asparagine glycosylation occurs at Asn131. Residue Asp194 coordinates Zn(2+). Asp194 acts as the Nucleophile in catalysis. N-linked (GlcNAc...) asparagine glycans are attached at residues Asn308, Asn343, and Asn365. Disulfide bonds link Cys410–Cys470 and Cys491–Cys499. Residue His444 coordinates Zn(2+). Asn495, Asn540, Asn639, Asn686, Asn760, and Asn927 each carry an N-linked (GlcNAc...) asparagine glycan.

This sequence belongs to the glycosyl hydrolase 38 family. Requires Zn(2+) as cofactor.

It is found in the lysosome. It carries out the reaction Hydrolysis of terminal, non-reducing alpha-D-mannose residues in alpha-D-mannosides.. Its function is as follows. Necessary for the catabolism of N-linked carbohydrates released during glycoprotein turnover. The protein is Lysosomal alpha-mannosidase (MAN2B1) of Cavia porcellus (Guinea pig).